The chain runs to 110 residues: uncharacterized protein (110 aa).

The disordered stretch occupies residues 38 to 62 (SVQQNARAEEAEAAAPPAEEDSLPD).

This is an uncharacterized protein from Mus musculus (Mouse).